The following is a 597-amino-acid chain: MSASYQTIEHDVPQSYRDKILKWNGWGYSDSQFAINKDGHVTFTGDKYEISGKVMPHFRPWFENYLGIDLGFVSPAQKLSDVIIDAPVENEDIIEFLQENKISFSNEARIRLMRGHGHTVHDMINLREGKIPRLPDIVVWPKSEHEIVKIIEGAMSHNCAIIPIGGGTSVTNALDTPETEKRAVISMDMALLDKILWIDRENLTCRAQAGIVGQSLERQLNKKGFTCGHEPDSIEFSTLGGWVSTRASGMKKNKYGNIEDLVVHLNFVCPKGIIQKQCQVPRMSSGPDIHQIILGSEGTLGVVSEVTIKIFPIPEVKRFGSFVFPNFESGVNFFREVAIQRCQPASLRLMDNDQFVMGQALKVASDSWWADLKSSVSKMYITSWKGFKVDEICAATCVYEGNREEVDQHEERLNKLAEQFHGVVGGAENGQYGYRLTFAIAYLRDLGMNHGVLGESFETSVPWDKVLSLCRNVKELMKREAKAQGVTHPVLANCRVTQVYDAGACVYFYFGFNARGLKNGLEVYDRIETAARDEIIACGGSISHHHGVGKIRKQWMLTTNGAVGIALLKAIKSELDPANIFASANLIDIIGSPHCKL.

The region spanning isoleucine 131–isoleucine 313 is the FAD-binding PCMH-type domain. FAD contacts are provided by residues proline 163–serine 169, aspartate 232–threonine 238, threonine 245–serine 248, and glutamate 297–valine 303. Arginine 444 provides a ligand contact to substrate. Tyrosine 507 (proton donor/acceptor) is an active-site residue. Positions histidine 544–histidine 546 are important for enzyme activity. The Microbody targeting signal signature appears at cysteine 595–leucine 597.

The protein belongs to the FAD-binding oxidoreductase/transferase type 4 family. Homodimer. It depends on FAD as a cofactor.

The protein localises to the peroxisome. The enzyme catalyses a long chain fatty alcohol + a 1-acylglycerone 3-phosphate = a 1-O-alkylglycerone 3-phosphate + a long-chain fatty acid + H(+). Its pathway is glycerolipid metabolism; ether lipid biosynthesis. Its function is as follows. Catalyzes the exchange of an acyl for a long-chain alkyl group and the formation of the ether bond in the biosynthesis of ether phospholipids. The chain is Alkyldihydroxyacetonephosphate synthase (ads-1) from Caenorhabditis elegans.